Reading from the N-terminus, the 189-residue chain is GTP cyclohydrolase 1 (189 aa).

Zn(2+)-binding residues include Cys78, His81, and Cys150.

Belongs to the GTP cyclohydrolase I family. Homomer.

It carries out the reaction GTP + H2O = 7,8-dihydroneopterin 3'-triphosphate + formate + H(+). The protein operates within cofactor biosynthesis; 7,8-dihydroneopterin triphosphate biosynthesis; 7,8-dihydroneopterin triphosphate from GTP: step 1/1. This chain is GTP cyclohydrolase 1, found in Bacillus mycoides (strain KBAB4) (Bacillus weihenstephanensis).